The following is a 394-amino-acid chain: Aspergillopepsin-1 (394 aa).

The N-terminal stretch at 1-20 (MVVFSKTAALVLGLSTAVSA) is a signal peptide. The propeptide at 21–69 (APAPTRKGFTINQIARPANKTRTVNLPGLYARSLAKFGGTVPQSVKEAA) is activation peptide. Residues 85 to 391 (YLTPVTVGKS…NSEGPKLGFA (307 aa)) enclose the Peptidase A1 domain. Catalysis depends on residues D101 and D283. A disulfide bond links C319 and C354.

Belongs to the peptidase A1 family.

The protein localises to the secreted. The catalysed reaction is Hydrolysis of proteins with broad specificity. Generally favors hydrophobic residues in P1 and P1', but also accepts Lys in P1, which leads to activation of trypsinogen. Does not clot milk.. Secreted aspartic endopeptidase that allows assimilation of proteinaceous substrates. The scissile peptide bond is attacked by a nucleophilic water molecule activated by two aspartic residues in the active site. Shows a broad primary substrate specificity. Favors hydrophobic residues at the P1 and P1' positions, but also accepts a lysine residue in the P1 position, leading to the activation of trypsinogen and chymotrypsinogen A. The sequence is that of Aspergillopepsin-1 from Aspergillus niger.